The primary structure comprises 130 residues: Ribonuclease P protein component (130 aa).

Belongs to the RnpA family. In terms of assembly, consists of a catalytic RNA component (M1 or rnpB) and a protein subunit.

The catalysed reaction is Endonucleolytic cleavage of RNA, removing 5'-extranucleotides from tRNA precursor.. RNaseP catalyzes the removal of the 5'-leader sequence from pre-tRNA to produce the mature 5'-terminus. It can also cleave other RNA substrates such as 4.5S RNA. The protein component plays an auxiliary but essential role in vivo by binding to the 5'-leader sequence and broadening the substrate specificity of the ribozyme. The polypeptide is Ribonuclease P protein component (Desulfovibrio desulfuricans (strain ATCC 27774 / DSM 6949 / MB)).